The sequence spans 109 residues: T cell receptor alpha variable 27 (109 aa).

The signal sequence occupies residues 1-19; it reads MVLKFSVSILWIQLAWVST. An Ig-like domain is found at 20-109; the sequence is QLLEQSPQFL…GDTGLYLCAG (90 aa). N-linked (GlcNAc...) asparagine glycans are attached at residues N36 and N42. A disulfide bridge links C41 with C107.

In terms of assembly, alpha-beta TR is a heterodimer composed of an alpha and beta chain; disulfide-linked. The alpha-beta TR is associated with the transmembrane signaling CD3 coreceptor proteins to form the TR-CD3 (TcR or TCR). The assembly of alpha-beta TR heterodimers with CD3 occurs in the endoplasmic reticulum where a single alpha-beta TR heterodimer associates with one CD3D-CD3E heterodimer, one CD3G-CD3E heterodimer and one CD247 homodimer forming a stable octameric structure. CD3D-CD3E and CD3G-CD3E heterodimers preferentially associate with TR alpha and TR beta chains, respectively. The association of the CD247 homodimer is the last step of TcR assembly in the endoplasmic reticulum and is required for transport to the cell surface. (Microbial infection) Interacts with Staphylococcus aureus enterotoxin H/entH.

The protein resides in the cell membrane. Functionally, v region of the variable domain of T cell receptor (TR) alpha chain that participates in the antigen recognition. Alpha-beta T cell receptors are antigen specific receptors which are essential to the immune response and are present on the cell surface of T lymphocytes. Recognize peptide-major histocompatibility (MH) (pMH) complexes that are displayed by antigen presenting cells (APC), a prerequisite for efficient T cell adaptive immunity against pathogens. Binding of alpha-beta TR to pMH complex initiates TR-CD3 clustering on the cell surface and intracellular activation of LCK that phosphorylates the ITAM motifs of CD3G, CD3D, CD3E and CD247 enabling the recruitment of ZAP70. In turn, ZAP70 phosphorylates LAT, which recruits numerous signaling molecules to form the LAT signalosome. The LAT signalosome propagates signal branching to three major signaling pathways, the calcium, the mitogen-activated protein kinase (MAPK) kinase and the nuclear factor NF-kappa-B (NF-kB) pathways, leading to the mobilization of transcription factors that are critical for gene expression and essential for T cell growth and differentiation. The T cell repertoire is generated in the thymus, by V-(D)-J rearrangement. This repertoire is then shaped by intrathymic selection events to generate a peripheral T cell pool of self-MH restricted, non-autoaggressive T cells. Post-thymic interaction of alpha-beta TR with the pMH complexes shapes TR structural and functional avidity. This is T cell receptor alpha variable 27 from Homo sapiens (Human).